Here is a 413-residue protein sequence, read N- to C-terminus: Probable elongation factor 1-gamma 2 (413 aa).

A GST N-terminal domain is found at 1–82; the sequence is MALVMHTYKG…YVSRKNGDNS (82 aa). In terms of domain architecture, GST C-terminal spans 87–215; that stretch reads SLIEYAHIEQ…AKQTEAVPPV (129 aa). The interval 207–260 is disordered; the sequence is KQTEAVPPVPTKKAPQPAKPKEEPKKAAPVAEAPKPAEEEEAPKPKAKNPLDLL. The EF-1-gamma C-terminal domain occupies 253–413; it reads AKNPLDLLPP…EALLDAKCFK (161 aa).

EF-1 is composed of four subunits: alpha, beta, delta, and gamma.

Probably plays a role in anchoring the complex to other cellular components. This chain is Probable elongation factor 1-gamma 2, found in Arabidopsis thaliana (Mouse-ear cress).